A 345-amino-acid polypeptide reads, in one-letter code: 4-hydroxy-2-oxovalerate aldolase 1 (345 aa).

A Pyruvate carboxyltransferase domain is found at 9–261 (IRVTDTSLRD…RTGIDFFAIA (253 aa)). Residue 17-18 (RD) coordinates substrate. Residue aspartate 18 participates in Mn(2+) binding. The active-site Proton acceptor is the histidine 21. Residues serine 171 and histidine 200 each coordinate substrate. Histidine 200 and histidine 202 together coordinate Mn(2+). Tyrosine 291 serves as a coordination point for substrate.

It belongs to the 4-hydroxy-2-oxovalerate aldolase family.

It catalyses the reaction (S)-4-hydroxy-2-oxopentanoate = acetaldehyde + pyruvate. The protein is 4-hydroxy-2-oxovalerate aldolase 1 of Nocardia farcinica (strain IFM 10152).